Here is a 643-residue protein sequence, read N- to C-terminus: Melanoma-associated antigen C3 (643 aa).

2 consecutive MAGE domains span residues 184–384 and 456–643; these read LDEK…AAGM and LDEK…FCPE. Positions 347–421 are disordered; the sequence is NPQGLAGHRQ…PQSPLDSCSS (75 aa). Residues 354–363 are compositionally biased toward basic and acidic residues; it reads HRQEDGRRGL. A compositionally biased stretch (pro residues) spans 383–414; sequence GMPPLPQSPPEIPPQGPPKISPQGPPQSPPQS. Residues T478, T484, and T485 each carry the phosphothreonine modification.

As to expression, expressed in testis. Not expressed in other normal tissues, but is expressed in tumors of different histological origins.

The chain is Melanoma-associated antigen C3 (MAGEC3) from Homo sapiens (Human).